Here is a 312-residue protein sequence, read N- to C-terminus: Olfactory receptor 1F1 (312 aa).

The Extracellular segment spans residues 1-25 (MSGTNQSSVSEFLLLGLSRQPQQQH). Asn5 carries an N-linked (GlcNAc...) asparagine glycan. The chain crosses the membrane as a helical span at residues 26–49 (LLFVFFLSMYLATVLGNLLIILSV). At 50 to 57 (SIDSCLHT) the chain is on the cytoplasmic side. A helical transmembrane segment spans residues 58–79 (PMYFFLSNLSFVDICFSFTTVP). The Extracellular segment spans residues 80 to 100 (KMLANHILETQTISFCGCLTQ). The cysteines at positions 97 and 189 are disulfide-linked. Residues 101–120 (MYFVFMFVDMDNFLLAVMAY) form a helical membrane-spanning segment. The Cytoplasmic segment spans residues 121-139 (DHFVAVCHPLHYTAKMTHQ). Residues 140-158 (LCALLVAGLWVVANLNVLL) traverse the membrane as a helical segment. Topologically, residues 159-196 (HTLLMAPLSFCADNAITHFFCDVTPLLKLSCSDTHLNE) are extracellular. Residues 197-219 (VIILSEGALVMITPFLCILASYM) traverse the membrane as a helical segment. The Cytoplasmic portion of the chain corresponds to 220–236 (HITCTVLKVPSTKGRWK). The chain crosses the membrane as a helical span at residues 237 to 259 (AFSTCGSHLAVVLLFYSTIIAVY). Over 260-272 (FNPLSSHSAEKDT) the chain is Extracellular. The chain crosses the membrane as a helical span at residues 273-292 (MATVLYTVVTPMLNPFIYSL). Residues 293 to 312 (RNRYLKGALKKVVGRVVFSV) are Cytoplasmic-facing.

The protein belongs to the G-protein coupled receptor 1 family.

The protein resides in the cell membrane. Odorant receptor. The chain is Olfactory receptor 1F1 (OR1F1) from Homo sapiens (Human).